The following is a 547-amino-acid chain: Methionine--tRNA ligase (547 aa).

Positions 15–25 match the 'HIGH' region motif; sequence PYANGSIHIGH. Residues Cys-146, Cys-149, Cys-159, and Cys-162 each coordinate Zn(2+). Residues 332–336 carry the 'KMSKS' region motif; sequence KLSKS. Lys-335 provides a ligand contact to ATP.

This sequence belongs to the class-I aminoacyl-tRNA synthetase family. MetG type 1 subfamily. In terms of assembly, monomer. Zn(2+) is required as a cofactor.

The protein localises to the cytoplasm. It carries out the reaction tRNA(Met) + L-methionine + ATP = L-methionyl-tRNA(Met) + AMP + diphosphate. Is required not only for elongation of protein synthesis but also for the initiation of all mRNA translation through initiator tRNA(fMet) aminoacylation. In Buchnera aphidicola subsp. Acyrthosiphon pisum (strain APS) (Acyrthosiphon pisum symbiotic bacterium), this protein is Methionine--tRNA ligase (metG).